A 150-amino-acid polypeptide reads, in one-letter code: Putative pre-16S rRNA nuclease (150 aa).

This sequence belongs to the YqgF nuclease family.

The protein resides in the cytoplasm. Could be a nuclease involved in processing of the 5'-end of pre-16S rRNA. The polypeptide is Putative pre-16S rRNA nuclease (Chlamydia felis (strain Fe/C-56) (Chlamydophila felis)).